Here is a 270-residue protein sequence, read N- to C-terminus: 4-hydroxy-tetrahydrodipicolinate reductase (270 aa).

Residue 7–12 (GANGRM) participates in NAD(+) binding. R34 is an NADP(+) binding site. Residues 97-99 (GTT) and 121-124 (SGNM) contribute to the NAD(+) site. The active-site Proton donor/acceptor is the H155. Position 156 (H156) interacts with (S)-2,3,4,5-tetrahydrodipicolinate. K159 functions as the Proton donor in the catalytic mechanism. 165 to 166 (GT) contributes to the (S)-2,3,4,5-tetrahydrodipicolinate binding site.

The protein belongs to the DapB family.

The protein resides in the cytoplasm. It catalyses the reaction (S)-2,3,4,5-tetrahydrodipicolinate + NAD(+) + H2O = (2S,4S)-4-hydroxy-2,3,4,5-tetrahydrodipicolinate + NADH + H(+). The enzyme catalyses (S)-2,3,4,5-tetrahydrodipicolinate + NADP(+) + H2O = (2S,4S)-4-hydroxy-2,3,4,5-tetrahydrodipicolinate + NADPH + H(+). It functions in the pathway amino-acid biosynthesis; L-lysine biosynthesis via DAP pathway; (S)-tetrahydrodipicolinate from L-aspartate: step 4/4. Catalyzes the conversion of 4-hydroxy-tetrahydrodipicolinate (HTPA) to tetrahydrodipicolinate. The sequence is that of 4-hydroxy-tetrahydrodipicolinate reductase from Bartonella tribocorum (strain CIP 105476 / IBS 506).